Consider the following 359-residue polypeptide: Peptide chain release factor 1 (359 aa).

At Gln-235 the chain carries N5-methylglutamine.

The protein belongs to the prokaryotic/mitochondrial release factor family. Methylated by PrmC. Methylation increases the termination efficiency of RF1.

The protein localises to the cytoplasm. Its function is as follows. Peptide chain release factor 1 directs the termination of translation in response to the peptide chain termination codons UAG and UAA. This is Peptide chain release factor 1 from Chelativorans sp. (strain BNC1).